We begin with the raw amino-acid sequence, 257 residues long: 3-deoxy-manno-octulosonate cytidylyltransferase (257 aa).

The protein belongs to the KdsB family.

It is found in the cytoplasm. The enzyme catalyses 3-deoxy-alpha-D-manno-oct-2-ulosonate + CTP = CMP-3-deoxy-beta-D-manno-octulosonate + diphosphate. It functions in the pathway nucleotide-sugar biosynthesis; CMP-3-deoxy-D-manno-octulosonate biosynthesis; CMP-3-deoxy-D-manno-octulosonate from 3-deoxy-D-manno-octulosonate and CTP: step 1/1. It participates in bacterial outer membrane biogenesis; lipopolysaccharide biosynthesis. Activates KDO (a required 8-carbon sugar) for incorporation into bacterial lipopolysaccharide in Gram-negative bacteria. The chain is 3-deoxy-manno-octulosonate cytidylyltransferase from Methylococcus capsulatus (strain ATCC 33009 / NCIMB 11132 / Bath).